Consider the following 251-residue polypeptide: Hydroxyacylglutathione hydrolase (251 aa).

Residues H53, H55, D57, H58, H110, D127, and H165 each coordinate Zn(2+).

The protein belongs to the metallo-beta-lactamase superfamily. Glyoxalase II family. As to quaternary structure, monomer. It depends on Zn(2+) as a cofactor.

The catalysed reaction is an S-(2-hydroxyacyl)glutathione + H2O = a 2-hydroxy carboxylate + glutathione + H(+). The protein operates within secondary metabolite metabolism; methylglyoxal degradation; (R)-lactate from methylglyoxal: step 2/2. Thiolesterase that catalyzes the hydrolysis of S-D-lactoyl-glutathione to form glutathione and D-lactic acid. This Escherichia coli O17:K52:H18 (strain UMN026 / ExPEC) protein is Hydroxyacylglutathione hydrolase.